The sequence spans 271 residues: tRNA (guanine-N(7)-)-methyltransferase (271 aa).

Glutamate 95, glutamate 120, aspartate 147, and aspartate 175 together coordinate S-adenosyl-L-methionine. The active site involves aspartate 175. Residues lysine 179, aspartate 211, and threonine 249 to glutamate 252 each bind substrate.

It belongs to the class I-like SAM-binding methyltransferase superfamily. TrmB family.

The catalysed reaction is guanosine(46) in tRNA + S-adenosyl-L-methionine = N(7)-methylguanosine(46) in tRNA + S-adenosyl-L-homocysteine. The protein operates within tRNA modification; N(7)-methylguanine-tRNA biosynthesis. In terms of biological role, catalyzes the formation of N(7)-methylguanine at position 46 (m7G46) in tRNA. The chain is tRNA (guanine-N(7)-)-methyltransferase from Rhodopirellula baltica (strain DSM 10527 / NCIMB 13988 / SH1).